We begin with the raw amino-acid sequence, 85 residues long: Small ribosomal subunit protein uS17 (85 aa).

This sequence belongs to the universal ribosomal protein uS17 family. As to quaternary structure, part of the 30S ribosomal subunit.

Functionally, one of the primary rRNA binding proteins, it binds specifically to the 5'-end of 16S ribosomal RNA. This chain is Small ribosomal subunit protein uS17, found in Desulforudis audaxviator (strain MP104C).